Reading from the N-terminus, the 180-residue chain is Probable macrolide acetyltransferase (180 aa).

Belongs to the transferase hexapeptide repeat family.

The polypeptide is Probable macrolide acetyltransferase (Lysinibacillus sphaericus (Bacillus sphaericus)).